We begin with the raw amino-acid sequence, 234 residues long: UPF0173 metal-dependent hydrolase RHE_CH01853 (234 aa).

Belongs to the UPF0173 family.

This is UPF0173 metal-dependent hydrolase RHE_CH01853 from Rhizobium etli (strain ATCC 51251 / DSM 11541 / JCM 21823 / NBRC 15573 / CFN 42).